Consider the following 137-residue polypeptide: Protein PsiE homolog (137 aa).

Transmembrane regions (helical) follow at residues 13-35, 55-77, 84-103, and 107-129; these read ILLR…AFLI, YYMT…IVKY, FPLR…FIIV, and SATS…FLAN.

It belongs to the PsiE family.

It localises to the cell membrane. The chain is Protein PsiE homolog from Listeria monocytogenes serotype 4b (strain F2365).